Reading from the N-terminus, the 779-residue chain is Lon protease (779 aa).

In terms of domain architecture, Lon N-terminal spans Val7 to Leu190. Gly352–Thr359 serves as a coordination point for ATP. The Lon proteolytic domain occupies Thr589–Pro769. Catalysis depends on residues Ser675 and Lys718.

The protein belongs to the peptidase S16 family. Homohexamer. Organized in a ring with a central cavity. Oligomerization is Mg(2+)-dependent.

It localises to the cytoplasm. It catalyses the reaction Hydrolysis of proteins in presence of ATP.. Stimulated by unfolded protein. ATP-dependent serine protease that mediates the selective degradation of mutant and abnormal proteins as well as certain short-lived regulatory proteins. Required for cellular homeostasis and for survival from DNA damage and developmental changes induced by stress. Degrades polypeptides processively to yield small peptide fragments that are 5 to 10 amino acids long. Binds to DNA in a double-stranded, site-specific manner. The protein is Lon protease of Mycolicibacterium smegmatis (Mycobacterium smegmatis).